The chain runs to 236 residues: Leucyl/phenylalanyl-tRNA--protein transferase (236 aa).

Belongs to the L/F-transferase family.

Its subcellular location is the cytoplasm. The catalysed reaction is N-terminal L-lysyl-[protein] + L-leucyl-tRNA(Leu) = N-terminal L-leucyl-L-lysyl-[protein] + tRNA(Leu) + H(+). It carries out the reaction N-terminal L-arginyl-[protein] + L-leucyl-tRNA(Leu) = N-terminal L-leucyl-L-arginyl-[protein] + tRNA(Leu) + H(+). The enzyme catalyses L-phenylalanyl-tRNA(Phe) + an N-terminal L-alpha-aminoacyl-[protein] = an N-terminal L-phenylalanyl-L-alpha-aminoacyl-[protein] + tRNA(Phe). Its function is as follows. Functions in the N-end rule pathway of protein degradation where it conjugates Leu, Phe and, less efficiently, Met from aminoacyl-tRNAs to the N-termini of proteins containing an N-terminal arginine or lysine. The sequence is that of Leucyl/phenylalanyl-tRNA--protein transferase from Yersinia pseudotuberculosis serotype O:1b (strain IP 31758).